The primary structure comprises 361 residues: Chorismate synthase (361 aa).

R48 and R54 together coordinate NADP(+). Residues 125 to 127, 238 to 239, G278, 293 to 297, and R319 each bind FMN; these read RSS, NA, and KPTSS.

Belongs to the chorismate synthase family. In terms of assembly, homotetramer. FMNH2 serves as cofactor.

The enzyme catalyses 5-O-(1-carboxyvinyl)-3-phosphoshikimate = chorismate + phosphate. It participates in metabolic intermediate biosynthesis; chorismate biosynthesis; chorismate from D-erythrose 4-phosphate and phosphoenolpyruvate: step 7/7. Catalyzes the anti-1,4-elimination of the C-3 phosphate and the C-6 proR hydrogen from 5-enolpyruvylshikimate-3-phosphate (EPSP) to yield chorismate, which is the branch point compound that serves as the starting substrate for the three terminal pathways of aromatic amino acid biosynthesis. This reaction introduces a second double bond into the aromatic ring system. In Vibrio parahaemolyticus serotype O3:K6 (strain RIMD 2210633), this protein is Chorismate synthase.